Here is a 439-residue protein sequence, read N- to C-terminus: MTCDDFRAEDEQPIEVDERRRRLKRKANDDDDDDETVRERVDDAESSMEVFEAEYPPILDPLQDQREAKYFRERMQRFDLYSRTTGLSVDDIDWPLIRGRSLQKGRVAGISFVYDDTRYPINRFSDTWLLCVTKQKLFSFGAGCVEDLNITSFVLRRTMKVLSTYCNWLFEAAKRNNRRHITHKEIQELINRDGFRFHQYLQKFLIGRGMEYTEYNNRFFKYLHEEYNKNPGGLETIYSNQDFIAKETAQANYIYDTVRAKYGGFEELPLFRHALKISFTQPGEHYFSRFYAKRFHEALGCPPLDSEIIMILDWFGVLIMNQIAYKTIRWHEEEYNDGSFPVLDSYHKALADESKCPKACLISISLFPDDPLFDLDIDYGTNPPPVNTAYQKVRRTPRDPTPFYRLMEFEDYKSCLVKMHFNFSELTGEWLRKICARGR.

The tract at residues Arg21 to Glu45 is disordered.

As to quaternary structure, component of a complex containing fem-1, fem-2 and fem-3. Interacts with fem-1 and fem-2 (via N-terminus). Part of a E3 ubiquitin-protein ligase complex, at least composed of cul-2, elc-1, tra-1, fem-1, fem-2 and fem-3; mediates the ubiquitination and subsequent proteasomal degradation of tra-1. Interacts with tra-1. Interacts with sel-10. Interacts with tra-2.

Required for male development. In XO (male) animals, fem-3 directs male differentiation in all tissues. In XX (hermaphrodite) animals, it specifies the first 80 or so germ cells to be sperm. Negatively regulates male development when bound to tra-2. Together with fem-2 associates with the CBC(fem-1) E3 ubiquitin-protein ligase complex which mediates the ubiquitination and subsequent proteasomal degradation of tra-1. The chain is Sex-determination protein fem-3 from Caenorhabditis remanei (Caenorhabditis vulgaris).